A 184-amino-acid polypeptide reads, in one-letter code: dCTP deaminase (184 aa).

Residues 107–112 (KSTYAR), 131–133 (TLE), Gln152, Tyr166, and Gln176 each bind dCTP. The active-site Proton donor/acceptor is the Glu133.

The protein belongs to the dCTP deaminase family. In terms of assembly, homotrimer.

It carries out the reaction dCTP + H2O + H(+) = dUTP + NH4(+). It functions in the pathway pyrimidine metabolism; dUMP biosynthesis; dUMP from dCTP (dUTP route): step 1/2. Its function is as follows. Catalyzes the deamination of dCTP to dUTP. This is dCTP deaminase from Paramagnetospirillum magneticum (strain ATCC 700264 / AMB-1) (Magnetospirillum magneticum).